We begin with the raw amino-acid sequence, 445 residues long: Phosphoglucosamine mutase (445 aa).

Serine 102 serves as the catalytic Phosphoserine intermediate. Mg(2+) contacts are provided by serine 102, aspartate 241, aspartate 243, and aspartate 245. Serine 102 is modified (phosphoserine).

This sequence belongs to the phosphohexose mutase family. Requires Mg(2+) as cofactor. In terms of processing, activated by phosphorylation.

It carries out the reaction alpha-D-glucosamine 1-phosphate = D-glucosamine 6-phosphate. Its function is as follows. Catalyzes the conversion of glucosamine-6-phosphate to glucosamine-1-phosphate. The chain is Phosphoglucosamine mutase from Shewanella sp. (strain ANA-3).